The following is a 535-amino-acid chain: Bifunctional purine biosynthesis protein PurH (535 aa).

Positions 1 to 148 (MNNARPIRRA…KNHKDTTIIV (148 aa)) constitute an MGS-like domain.

This sequence belongs to the PurH family.

The catalysed reaction is (6R)-10-formyltetrahydrofolate + 5-amino-1-(5-phospho-beta-D-ribosyl)imidazole-4-carboxamide = 5-formamido-1-(5-phospho-D-ribosyl)imidazole-4-carboxamide + (6S)-5,6,7,8-tetrahydrofolate. It carries out the reaction IMP + H2O = 5-formamido-1-(5-phospho-D-ribosyl)imidazole-4-carboxamide. It participates in purine metabolism; IMP biosynthesis via de novo pathway; 5-formamido-1-(5-phospho-D-ribosyl)imidazole-4-carboxamide from 5-amino-1-(5-phospho-D-ribosyl)imidazole-4-carboxamide (10-formyl THF route): step 1/1. Its pathway is purine metabolism; IMP biosynthesis via de novo pathway; IMP from 5-formamido-1-(5-phospho-D-ribosyl)imidazole-4-carboxamide: step 1/1. The polypeptide is Bifunctional purine biosynthesis protein PurH (Shewanella woodyi (strain ATCC 51908 / MS32)).